Here is a 289-residue protein sequence, read N- to C-terminus: Protoheme IX farnesyltransferase (289 aa).

Helical transmembrane passes span 13–33 (LIKP…LYLA), 40–60 (VFLI…SFIF), 85–105 (ISIP…FYML), 111–131 (LLTA…YTIF), 139–159 (NIVI…AAIG), 168–188 (ILFT…AIFL), 212–232 (SIFF…FLEP), 234–254 (MGLL…ILSY), and 269–289 (FLFS…DHMI).

This sequence belongs to the UbiA prenyltransferase family. Protoheme IX farnesyltransferase subfamily.

It localises to the cell inner membrane. The enzyme catalyses heme b + (2E,6E)-farnesyl diphosphate + H2O = Fe(II)-heme o + diphosphate. It participates in porphyrin-containing compound metabolism; heme O biosynthesis; heme O from protoheme: step 1/1. Its function is as follows. Converts heme B (protoheme IX) to heme O by substitution of the vinyl group on carbon 2 of heme B porphyrin ring with a hydroxyethyl farnesyl side group. This chain is Protoheme IX farnesyltransferase, found in Leptospira borgpetersenii serovar Hardjo-bovis (strain JB197).